Here is a 149-residue protein sequence, read N- to C-terminus: UPF0179 protein MM_0589 (149 aa).

It belongs to the UPF0179 family.

This chain is UPF0179 protein MM_0589, found in Methanosarcina mazei (strain ATCC BAA-159 / DSM 3647 / Goe1 / Go1 / JCM 11833 / OCM 88) (Methanosarcina frisia).